The sequence spans 1012 residues: Ubiquitin-like modifier-activating enzyme 7 (1012 aa).

A 1-1 repeat occupies 23 to 159; that stretch reads GSPAMQRIQG…DTRGLVGQLF (137 aa). The 2 approximate repeats stretch occupies residues 23 to 575; the sequence is GSPAMQRIQG…GTWGSATVFM (553 aa). A Phosphoserine modification is found at S266. The stretch at 423 to 575 is one 1-2 repeat; that stretch reads GAGFQEKLRR…GTWGSATVFM (153 aa). 442-471 is an ATP binding site; the sequence is AIGCELLKVFALVGLGAGNSGGLTVVDMDH. The active-site Glycyl thioester intermediate is C599.

This sequence belongs to the ubiquitin-activating E1 family. In terms of assembly, (Microbial infection) Interacts with human cytomegalovirus proteins NEC2/UL50 and UL26; these interactions inhibit ISGylation and cause proteasomal degradation of UBA7. (Microbial infection) Interacts with rotavirus non-structural protein 5 (NSP5); this interaction promotes UBA7 proteasomal degradation. As to quaternary structure, monomer. Binds and is involved in the conjugation of G1P2/ISG15. ISGylated. In terms of processing, ubiquitinated by RNF170. Expressed in a variety of normal and tumor cell types, but is reduced in lung cancer cell lines.

It localises to the cytoplasm. The protein localises to the nucleus. It participates in protein modification; protein ubiquitination. Its function is as follows. E1-activating enzyme that catalyzes the covalent conjugation of the ubiquitin-like protein product of ISG15 to additional interferon stimulated proteins (ISGs) as well as other cellular proteins such as P53 in a process termed protein ISGylation. Plays an essential role in antiviral immunity together with ISG15 by restricting the replication of many viruses including rabies virus, influenza virus, sindbis virus, rotavirus or human cytomegalovirus. For example, ISG15 modification of influenza A protein NS1 disrupts the association of the NS1 with importin-alpha leading to NS1 nuclear import inhibition. ISGylation of human cytomegalovirs protein UL26 regulates its stability and inhibits its activities to suppress NF-kappa-B signaling. The sequence is that of Ubiquitin-like modifier-activating enzyme 7 from Homo sapiens (Human).